A 284-amino-acid polypeptide reads, in one-letter code: Pantothenate synthetase (284 aa).

M30–H37 serves as a coordination point for ATP. H37 functions as the Proton donor in the catalytic mechanism. Q61 contributes to the (R)-pantoate binding site. Q61 lines the beta-alanine pocket. G149–D152 serves as a coordination point for ATP. A (R)-pantoate-binding site is contributed by Q155. ATP contacts are provided by residues V178 and L186–R189.

It belongs to the pantothenate synthetase family. In terms of assembly, homodimer.

The protein resides in the cytoplasm. It carries out the reaction (R)-pantoate + beta-alanine + ATP = (R)-pantothenate + AMP + diphosphate + H(+). It participates in cofactor biosynthesis; (R)-pantothenate biosynthesis; (R)-pantothenate from (R)-pantoate and beta-alanine: step 1/1. Catalyzes the condensation of pantoate with beta-alanine in an ATP-dependent reaction via a pantoyl-adenylate intermediate. This Yersinia pestis bv. Antiqua (strain Antiqua) protein is Pantothenate synthetase.